We begin with the raw amino-acid sequence, 111 residues long: MLNLGQVKVLEEKVAKAVHLVQMLKEENAALRAEIDGRGKRITELEQLVLXFQDDQTKIEEGILKALNHLSTFEDSAYGEALTQHAAKVLENREHAGLSEELTSRTQMEIF.

Residues 4-51 (LGQVKVLEEKVAKAVHLVQMLKEENAALRAEIDGRGKRITELEQLVLX) adopt a coiled-coil conformation.

This is an uncharacterized protein from Treponema pallidum (strain Nichols).